A 364-amino-acid polypeptide reads, in one-letter code: DNA replication and repair protein RecF (364 aa).

ATP is bound at residue glycine 30 to threonine 37.

Belongs to the RecF family.

It is found in the cytoplasm. The RecF protein is involved in DNA metabolism; it is required for DNA replication and normal SOS inducibility. RecF binds preferentially to single-stranded, linear DNA. It also seems to bind ATP. The polypeptide is DNA replication and repair protein RecF (Geobacter sp. (strain M21)).